The chain runs to 173 residues: Small ribosomal subunit protein mS25 (173 aa).

The protein belongs to the mitochondrion-specific ribosomal protein mS25 family. Component of the mitochondrial ribosome small subunit (28S) which comprises a 12S rRNA and about 30 distinct proteins.

The protein localises to the mitochondrion. This Bos taurus (Bovine) protein is Small ribosomal subunit protein mS25 (MRPS25).